The following is a 2151-amino-acid chain: RNA-directed RNA polymerase L (2151 aa).

Mn(2+)-binding residues include His36, Glu54, Asp97, Glu110, and Val111. Lys124 (for endonuclease activity) is an active-site residue. Positions 956 to 1142 (NGKFIRMKRK…SVNTEMWKSM (187 aa)) constitute a RdRp catalytic domain. Asp1099 is a Mg(2+) binding site.

It belongs to the Bunyavirales RNA polymerase family. As to quaternary structure, interacts with the viral nucleoprotein. The cofactor is Mn(2+). Mg(2+) serves as cofactor.

The protein localises to the host cytoplasm. The protein resides in the host perinuclear region. The catalysed reaction is RNA(n) + a ribonucleoside 5'-triphosphate = RNA(n+1) + diphosphate. Its function is as follows. RNA-dependent RNA polymerase, which is responsible for the replication and transcription of the viral RNA genome using antigenomic RNA as an intermediate. During transcription, synthesizes subgenomic RNAs and assures their capping by a cap-snatching mechanism, which involves the endonuclease activity cleaving the host capped pre-mRNAs. These short capped RNAs are then used as primers for viral transcription. Cleaves ssRNA substrates but not DNA. Seems to downregulate the expression of its own and heterologous mRNAs through its endonuclease activity. This chain is RNA-directed RNA polymerase L, found in Apodemus agrarius (Eurasian field mouse).